Here is a 119-residue protein sequence, read N- to C-terminus: Ribonuclease P protein component (119 aa).

It belongs to the RnpA family. Consists of a catalytic RNA component (M1 or rnpB) and a protein subunit.

The enzyme catalyses Endonucleolytic cleavage of RNA, removing 5'-extranucleotides from tRNA precursor.. Its function is as follows. RNaseP catalyzes the removal of the 5'-leader sequence from pre-tRNA to produce the mature 5'-terminus. It can also cleave other RNA substrates such as 4.5S RNA. The protein component plays an auxiliary but essential role in vivo by binding to the 5'-leader sequence and broadening the substrate specificity of the ribozyme. The polypeptide is Ribonuclease P protein component (Salmonella paratyphi A (strain AKU_12601)).